The primary structure comprises 697 residues: Ribosomal RNA large subunit methyltransferase K/L (697 aa).

The region spanning 43 to 154 (ILYNSLMWSR…QNLVHIMLDL (112 aa)) is the THUMP domain.

It belongs to the methyltransferase superfamily. RlmKL family.

It is found in the cytoplasm. The enzyme catalyses guanosine(2445) in 23S rRNA + S-adenosyl-L-methionine = N(2)-methylguanosine(2445) in 23S rRNA + S-adenosyl-L-homocysteine + H(+). It carries out the reaction guanosine(2069) in 23S rRNA + S-adenosyl-L-methionine = N(2)-methylguanosine(2069) in 23S rRNA + S-adenosyl-L-homocysteine + H(+). In terms of biological role, specifically methylates the guanine in position 2445 (m2G2445) and the guanine in position 2069 (m7G2069) of 23S rRNA. This is Ribosomal RNA large subunit methyltransferase K/L from Buchnera aphidicola subsp. Schizaphis graminum (strain Sg).